Reading from the N-terminus, the 284-residue chain is Shikimate dehydrogenase (NADP(+)) (284 aa).

Residues 20-22 (SIS) and serine 67 each bind shikimate. Catalysis depends on lysine 71, which acts as the Proton acceptor. Residues asparagine 92 and aspartate 107 each contribute to the shikimate site. Residues 129–133 (GAGGA) and valine 227 each bind NADP(+). Tyrosine 229 is a shikimate binding site. Glycine 250 contacts NADP(+).

It belongs to the shikimate dehydrogenase family. Homodimer.

It carries out the reaction shikimate + NADP(+) = 3-dehydroshikimate + NADPH + H(+). It functions in the pathway metabolic intermediate biosynthesis; chorismate biosynthesis; chorismate from D-erythrose 4-phosphate and phosphoenolpyruvate: step 4/7. Functionally, involved in the biosynthesis of the chorismate, which leads to the biosynthesis of aromatic amino acids. Catalyzes the reversible NADPH linked reduction of 3-dehydroshikimate (DHSA) to yield shikimate (SA). This Streptococcus sanguinis (strain SK36) protein is Shikimate dehydrogenase (NADP(+)).